The primary structure comprises 103 residues: Large ribosomal subunit protein bL21 (103 aa).

It belongs to the bacterial ribosomal protein bL21 family. As to quaternary structure, part of the 50S ribosomal subunit. Contacts protein L20.

This protein binds to 23S rRNA in the presence of protein L20. This chain is Large ribosomal subunit protein bL21, found in Alteromonas mediterranea (strain DSM 17117 / CIP 110805 / LMG 28347 / Deep ecotype).